A 392-amino-acid polypeptide reads, in one-letter code: uncharacterized protein (392 aa).

The protein belongs to the chlamydial CPn_0675/CT_696/TC_0068 family.

This is an uncharacterized protein from Chlamydia trachomatis serovar D (strain ATCC VR-885 / DSM 19411 / UW-3/Cx).